We begin with the raw amino-acid sequence, 223 residues long: Arginine kinase (223 aa).

Positions 56-222 (FVISTRVRLI…LELIKIEKEM (167 aa)) constitute a Phosphagen kinase C-terminal domain. Residues 59–63 (STRVR) and histidine 68 contribute to the ATP site. An L-arginine-binding site is contributed by cysteine 141. ATP is bound by residues 150–154 (RASVH) and 175–180 (RGTRGE). Residue glutamate 180 participates in L-arginine binding.

This sequence belongs to the ATP:guanido phosphotransferase family.

The catalysed reaction is L-arginine + ATP = N(omega)-phospho-L-arginine + ADP + H(+). The protein is Arginine kinase of Chionoecetes opilio (Atlantic snow crab).